We begin with the raw amino-acid sequence, 445 residues long: Fatty acid desaturase 3 (445 aa).

The interval 1 to 21 (MGGVGEPGPREGPAQPGAPLP) is disordered. The Cytoplasmic portion of the chain corresponds to 1 to 133 (MGGVGEPGPR…DMKLFDASPT (133 aa)). The Cytochrome b5 heme-binding domain maps to 20 to 97 (LPTFCWEQIR…LQPLLIGELA (78 aa)). Residues 134 to 154 (FFAFLLGHILAMEVLAWLLIY) form a helical membrane-spanning segment. Over 155–159 (LLGPG) the chain is Lumenal. A helical transmembrane segment spans residues 160–180 (WVPSALAAFILAISQAQSWCL). The Cytoplasmic segment spans residues 181–263 (QHDLGHASIF…KRRYLPYNQQ (83 aa)). The Histidine box-1 signature appears at 182-186 (HDLGH). The Histidine box-2 signature appears at 219 to 223 (HFQHH). The chain crosses the membrane as a helical span at residues 264 to 284 (HLYFFLIGPPLLTLVNFEVEN). The Lumenal portion of the chain corresponds to 285–306 (LAYMLVCMQWADLLWAASFYAR). A helical transmembrane segment spans residues 307–327 (FFLSYLPFYGVPGVLLFFVAV). Residues 328–445 (RVLESHWFVW…DIWLDAYLHQ (118 aa)) lie on the Cytoplasmic side of the membrane. Residues 383–387 (QIEHH) carry the Histidine box-3 motif.

It belongs to the fatty acid desaturase type 1 family. As to expression, highly expressed in various organs and tissues including liver, kidney, brain, lung, pancreas, testis, ovary and skeletal muscle (at protein level).

The protein resides in the endoplasmic reticulum membrane. It catalyses the reaction an N-acylsphing-4-enine + 2 Fe(II)-[cytochrome b5] + O2 + 2 H(+) = an N-acyl-sphinga-4E,14Z-dienine + 2 Fe(III)-[cytochrome b5] + 2 H2O. The catalysed reaction is N-(hexanoyl)sphing-4-enine + 2 Fe(II)-[cytochrome b5] + O2 + 2 H(+) = N-hexanoyl-sphinga-4E,14Z-dienine + 2 Fe(III)-[cytochrome b5] + 2 H2O. The enzyme catalyses sphing-4-enine + 2 Fe(II)-[cytochrome b5] + O2 + 2 H(+) = sphinga-4E,14Z-dienine + 2 Fe(III)-[cytochrome b5] + 2 H2O. It carries out the reaction (11E)-octadecenoyl-CoA + 2 Fe(II)-[cytochrome b5] + O2 + 2 H(+) = (11E,13Z)-octadecadienoyl-CoA + 2 Fe(III)-[cytochrome b5] + 2 H2O. It catalyses the reaction N-acyl-1-deoxysphinganine + 2 Fe(II)-[cytochrome b5] + O2 + 2 H(+) = N-acyl-1-deoxysphing-14Z-enine + 2 Fe(III)-[cytochrome b5] + 2 H2O. The catalysed reaction is an N-acylsphinganine + 2 Fe(II)-[cytochrome b5] + O2 + 2 H(+) = an N-acylsphing-14Z-enine + 2 Fe(III)-[cytochrome b5] + 2 H2O. It functions in the pathway lipid metabolism; sphingolipid metabolism. It participates in lipid metabolism; polyunsaturated fatty acid biosynthesis. In terms of biological role, mammals have different sphingoid bases that differ in their length and/or pattern of desaturation and hydroxyl groups. The predominant sphingoid base that comprises mammalian ceramides is sphing-4-enine (sphingosine or SPH) which has a trans (E) desaturation at carbon 4. FADS3 is a desaturase that introduces a cis (Z) double bond between carbon 14 and carbon 15 of the sphingoid base (also known as long chain base, LCB), producing LCBs such as sphinga-4,14-dienine (SPD, d18:2(4E,14Z)) from SPH. Prefers SPH-containing ceramides (N-acylsphing-4-enines) as substrates. Capable of metabolizing also the SPH in its free form. SPD ceramides occur widely in mammalian tissues and cells. Due to their unusual structure containing a cis double bond, SPD ceramides may have an opposite, negative role in lipid microdomain formation relative to conventional ceramides. Could be involved in the detoxification of 1-deoxy sphingolipids, by desaturating the cytotoxic 1-deoxysphinganine (1-deoxySA, m18:0), produced under pathological conditions, to 1-deoxysphingenine (1-deoxysphingosine, 1-deoxySO, m18:1). Although prefers SPH-containing ceramides (N-acylsphing-4-enines) as substrates, it also exhibits activity toward dihydrosphingosine-containing CERs (N-acylsphinganines) and produces 14Z-SPH-containing sphingolipids,which can be found in patients with DEGS1 mutations. Its desaturase mechanism involves an electron transfer facilitated by cytochrome b5. FADS3 also acts as a methyl-end fatty acyl coenzyme A (CoA) desaturase that introduces a cis double bond between the preexisting double bond and the terminal methyl group of the fatty acyl chain. Desaturates (11E)-octadecenoate (trans-vaccenoate, the predominant trans fatty acid in human milk) at carbon 13 to generate (11E,13Z)-octadecadienoate (also known as conjugated linoleic acid 11E,13Z-CLA). The sequence is that of Fatty acid desaturase 3 from Homo sapiens (Human).